A 968-amino-acid polypeptide reads, in one-letter code: RNA polymerase-associated protein RapA (968 aa).

Residues 164–334 form the Helicase ATP-binding domain; sequence EVGQRHAPRV…FARLRLLDPN (171 aa). An ATP-binding site is contributed by 177 to 184; the sequence is DEVGLGKT. The DEAH box signature appears at 280 to 283; sequence DEAH. The Helicase C-terminal domain occupies 490-664; the sequence is RVEWLLNYLV…AAPTEQEGLD (175 aa).

It belongs to the SNF2/RAD54 helicase family. RapA subfamily. In terms of assembly, interacts with the RNAP. Has a higher affinity for the core RNAP than for the holoenzyme. Its ATPase activity is stimulated by binding to RNAP.

In terms of biological role, transcription regulator that activates transcription by stimulating RNA polymerase (RNAP) recycling in case of stress conditions such as supercoiled DNA or high salt concentrations. Probably acts by releasing the RNAP, when it is trapped or immobilized on tightly supercoiled DNA. Does not activate transcription on linear DNA. Probably not involved in DNA repair. The polypeptide is RNA polymerase-associated protein RapA (Serratia proteamaculans (strain 568)).